Here is a 64-residue protein sequence, read N- to C-terminus: MAQEQTKRTGGGDEDDTPGADGAAGQERREKLAEDTDDLLDEIDDVLEENAEDFVRAYVQKGGQ.

The span at 1 to 11 shows a compositional bias: basic and acidic residues; that stretch reads MAQEQTKRTGG. The tract at residues 1–37 is disordered; sequence MAQEQTKRTGGGDEDDTPGADGAAGQERREKLAEDTD. Positions 21–58 are ARC ATPase binding; sequence DGAAGQERREKLAEDTDDLLDEIDDVLEENAEDFVRAY. Residues 24–52 adopt a coiled-coil conformation; sequence AGQERREKLAEDTDDLLDEIDDVLEENAE. The residue at position 64 (Gln-64) is a Deamidated glutamine. An Isoglutamyl lysine isopeptide (Gln-Lys) (interchain with K-? in acceptor proteins) cross-link involves residue Gln-64.

This sequence belongs to the prokaryotic ubiquitin-like protein family. Strongly interacts with the proteasome-associated ATPase ARC through a hydrophobic interface; the interacting region of Pup lies in its C-terminal half. There is one Pup binding site per ARC hexamer ring. Post-translationally, is modified by deamidation of its C-terminal glutamine to glutamate by the deamidase Dop, a prerequisite to the subsequent pupylation process.

It participates in protein degradation; proteasomal Pup-dependent pathway. Functionally, protein modifier that is covalently attached to lysine residues of substrate proteins, thereby targeting them for proteasomal degradation. The tagging system is termed pupylation. In Rhodococcus jostii (strain RHA1), this protein is Prokaryotic ubiquitin-like protein Pup.